We begin with the raw amino-acid sequence, 280 residues long: MAPAFGKCFMFCCAKTSPEKDEMATESYEAAIKGLNDLLSTKADLGNVAAAKIKALTAELKELDSSNSDAIERIKTGFTQFKTEKYLKNSTLFNHLAKTQTPKFLVFACSDSRVCPSHILNFQPGEAFVVRNIANMVPPFDQKRHSGVGAAVEYAVVHLKVENILVIGHSCCGGIKGLMSIEDDAAPTQSDFIENWVKIGASARNKIKEEHKDLSYDDQCNKCEKEAVNVSLGNLLSYPFVRAEVVKNTLAIRGGHYNFVKGTFDLWELDFKTTPAFAFS.

A2 bears the N-acetylalanine mark. The stretch at 47–76 (NVAAAKIKALTAELKELDSSNSDAIERIKT) forms a coiled coil. Phosphothreonine is present on T57. S117 is subject to Phosphoserine. The residue at position 223 (C223) is an S-nitrosocysteine.

Belongs to the beta-class carbonic anhydrase family. As to quaternary structure, interacts with DTX56. In terms of tissue distribution, strongly expressed in aerial tissues including leaves, stems, flowers and siliques. Accumulates in both guard cells and mesophyll cells.

It localises to the cell membrane. It catalyses the reaction hydrogencarbonate + H(+) = CO2 + H2O. Functionally, reversible hydration of carbon dioxide. Together with BCA1, involved in the CO(2) signaling pathway which controls gas-exchange between plants and the atmosphere by modulating stomatal development and movements. Promotes water use efficiency. This is Beta carbonic anhydrase 4 from Arabidopsis thaliana (Mouse-ear cress).